A 255-amino-acid chain; its full sequence is Flagellar brake protein YcgR (255 aa).

The region spanning 122–240 (QRRTYFRINT…ERDLQQVIFE (119 aa)) is the PilZ domain.

It belongs to the YcgR family. As to quaternary structure, monomer. Interacts with the flagellar basal bodies.

It localises to the bacterial flagellum basal body. Its function is as follows. Acts as a flagellar brake, regulating swimming and swarming in a bis-(3'-5') cyclic diguanylic acid (c-di-GMP)-dependent manner. Binds 1 c-di-GMP dimer per subunit. Increasing levels of c-di-GMP lead to decreased motility. This is Flagellar brake protein YcgR from Pectobacterium carotovorum subsp. carotovorum (strain PC1).